The primary structure comprises 263 residues: Aminoglycoside (3'') (9) adenylyltransferase (263 aa).

It catalyses the reaction streptomycin + ATP = 3''-O-adenylylstreptomycin + diphosphate. It carries out the reaction spectinomycin + ATP = 9-O-adenylylspectinomycin + diphosphate. In terms of biological role, mediates bacterial resistance to the antibiotics streptomycin and spectinomycin. This Escherichia coli protein is Aminoglycoside (3'') (9) adenylyltransferase.